A 474-amino-acid polypeptide reads, in one-letter code: MSSEDREAQEDELLALASIYDGDEFRKAESVQGGETRIYLDLPQNFKIFVSGNSNECLQNSGFEYTICFLPPLVLNFELPPDYPSSSPPSFTLSGKWLSPTQLSALCKHLDNLWEEHRGSVVLFAWMQFLKEETLAYLNIVSPFELKIGSQKKVQRRTAQASPNTELDFGGAAGSDVDQEEIVDERAVQDVESLSNLIQEILDFDQAQQIKCFNSKLFLCSICFCEKLGSECMYFLECRHVYCKACLKDYFEIQIRDGQVQCLNCPEPKCPSVATPGQVKELVEAELFARYDRLLLQSSLDLMADVVYCPRPCCQLPVMQEPGCTMGICSSCNFAFCTLCRLTYHGVSPCKVTAEKLMDLRNEYLQADEANKRLLDQRYGKRVIQKALEEMESKEWLEKNSKSCPCCGTPIEKLDGCNKMTCTGCMQYFCWICMGSLSRANPYKHFNDPGSPCFNRLFYAVDVDDDIWEDEVED.

One can recognise an RWD domain in the interval 11 to 137; the sequence is DELLALASIY…QFLKEETLAY (127 aa). A D-box motif is present at residues 37–45; the sequence is RIYLDLPQN. The segment at 216-457 is TRIAD supradomain; sequence KLFLCSICFC…DPGSPCFNRL (242 aa). Zn(2+) contacts are provided by Cys-220, Cys-223, Cys-238, His-240, Cys-243, Cys-246, Cys-265, Cys-270, Cys-309, Cys-314, Cys-329, Cys-332, Cys-337, Cys-340, and His-345. Residues 220–270 form an RING-type 1 zinc finger; the sequence is CSICFCEKLGSECMYFLECRHVYCKACLKDYFEIQIRDGQVQCLNCPEPKC. The IBR-type zinc finger occupies 289–350; the sequence is ARYDRLLLQS…RLTYHGVSPC (62 aa). Ser-348 carries the phosphoserine modification. A Zn(2+)-binding site is contributed by Cys-350. Positions 351–395 form a coiled coil; that stretch reads KVTAEKLMDLRNEYLQADEANKRLLDQRYGKRVIQKALEEMESKE. An interaction with androgen receptor region spans residues 361–474; that stretch reads RNEYLQADEA…DDIWEDEVED (114 aa). Residues Cys-404 and Cys-407 each contribute to the Zn(2+) site. An RING-type 2; atypical zinc finger spans residues 404 to 433; the sequence is CPCCGTPIEKLDGCNKMTCTGCMQYFCWIC. Cys-417 is a catalytic residue. Positions 422, 425, 430, 433, 445, and 453 each coordinate Zn(2+).

This sequence belongs to the RBR family. RNF14 subfamily. Interacts with GCN1; interaction takes place in response to ribosome collisions and is required for ubiquitination of EEF1A1/eEF1A. Interacts with the ubiquitin-conjugating enzymes UBE2E1 and UBE2E2. Interacts with AR/androgen receptor. Interacts with TCF7/TCF1, TCF7L1/TCF3 and TCF7L2/TCF4; promoting Wnt signaling. Post-translationally, RING-type zinc finger-dependent and UBE2E2-dependent autoubiquitination. As to expression, widely expressed.

It localises to the cytoplasm. Its subcellular location is the nucleus. The enzyme catalyses [E2 ubiquitin-conjugating enzyme]-S-ubiquitinyl-L-cysteine + [acceptor protein]-L-lysine = [E2 ubiquitin-conjugating enzyme]-L-cysteine + [acceptor protein]-N(6)-ubiquitinyl-L-lysine.. It functions in the pathway protein modification; protein ubiquitination. E3 ubiquitin-protein ligase that plays a key role in the RNF14-RNF25 translation quality control pathway, a pathway that takes place when a ribosome has stalled during translation, and which promotes ubiquitination and degradation of translation factors on stalled ribosomes. Recruited to stalled ribosomes by the ribosome collision sensor GCN1 and mediates 'Lys-6'-linked ubiquitination of target proteins, leading to their degradation. Mediates ubiquitination of EEF1A1/eEF1A and ETF1/eRF1 translation factors on stalled ribosomes, leading to their degradation. Also catalyzes ubiquitination of ribosomal proteins RPL0, RPL1, RPL12, RPS13 and RPS17. Specifically required to resolve RNA-protein cross-links caused by reactive aldehydes, which trigger translation stress by stalling ribosomes: acts by catalying 'Lys-6'-linked ubiquitination of RNA-protein cross-links, leading to their removal by the ATP-dependent unfoldase VCP and subsequent degradation by the proteasome. Independently of its function in the response to stalled ribosomes, acts as a regulator of transcription in Wnt signaling via its interaction with TCF transcription factors (TCF7/TCF1, TCF7L1/TCF3 and TCF7L2/TCF4). May also play a role as a coactivator for androgen- and, to a lesser extent, progesterone-dependent transcription. In Homo sapiens (Human), this protein is E3 ubiquitin-protein ligase RNF14.